Consider the following 424-residue polypeptide: Hemagglutinin-esterase (424 aa).

The signal sequence occupies residues 1-16 (MFLLPRFVLVSCIIGS). The segment at 7–127 (FVLVSCIIGS…SNDIWMQNKG (121 aa)) is esterase domain 1. The Virion surface segment spans residues 17–392 (LGFDNPPTNV…PICVYDPLPI (376 aa)). Residue S40 is the Nucleophile of the active site. Residues C44 and C65 are joined by a disulfide bond. N-linked (GlcNAc...) asparagine; by host glycosylation is found at N54, N89, N153, N236, and N301. 3 disulfide bridges follow: C113–C162, C197–C276, and C205–C249. Residues 128-266 (LFYTQVYKNM…GNYLAISNEL (139 aa)) form a receptor binding region. An esterase domain 2 region spans residues 267 to 379 (LLTVPTKAIC…RCPTAADINT (113 aa)). A disulfide bridge connects residues C307 and C312. N316 carries N-linked (GlcNAc...) asparagine; by host glycosylation. Residues D326 and H329 each act as charge relay system in the active site. A disulfide bridge links C347 with C371. N358 is a glycosylation site (N-linked (GlcNAc...) asparagine; by host). A helical membrane pass occupies residues 393–413 (ILLGILLSVAVIIIVVLLLYF). The Intravirion segment spans residues 414 to 424 (MVDNGTRLHDA). Residue N417 is glycosylated (N-linked (GlcNAc...) asparagine; by host).

It belongs to the influenza type C/coronaviruses hemagglutinin-esterase family. Homodimer; disulfide-linked. Forms a complex with the M protein in the pre-Golgi. Associates then with S-M complex to form a ternary complex S-M-HE. Post-translationally, N-glycosylated in the host RER.

The protein localises to the virion membrane. It localises to the host cell membrane. It catalyses the reaction N-acetyl-9-O-acetylneuraminate + H2O = N-acetylneuraminate + acetate + H(+). The catalysed reaction is N-acetyl-4-O-acetylneuraminate + H2O = N-acetylneuraminate + acetate + H(+). Its function is as follows. Structural protein that makes short spikes at the surface of the virus. Contains receptor binding and receptor-destroying activities. Mediates de-O-acetylation of N-acetyl-4-O-acetylneuraminic acid, which is probably the receptor determinant recognized by the virus on the surface of erythrocytes and susceptible cells. This receptor-destroying activity is important for virus release as it probably helps preventing self-aggregation and ensures the efficient spread of the progeny virus from cell to cell. May serve as a secondary viral attachment protein for initiating infection, the spike protein being the major one. May become a target for both the humoral and the cellular branches of the immune system. This chain is Hemagglutinin-esterase, found in Bos taurus (Bovine).